We begin with the raw amino-acid sequence, 239 residues long: Uridylate kinase (239 aa).

Position 10–13 (10–13) interacts with ATP; the sequence is KFSG. Positions 18–23 are involved in allosteric activation by GTP; it reads GENGFG. Glycine 52 is a UMP binding site. Positions 53 and 57 each coordinate ATP. UMP contacts are provided by residues aspartate 73 and 134 to 141; that span reads TGNPYFTT. The ATP site is built by threonine 161, tyrosine 167, and aspartate 170.

The protein belongs to the UMP kinase family. Homohexamer.

The protein localises to the cytoplasm. The enzyme catalyses UMP + ATP = UDP + ADP. The protein operates within pyrimidine metabolism; CTP biosynthesis via de novo pathway; UDP from UMP (UMPK route): step 1/1. Its activity is regulated as follows. Allosterically activated by GTP. Inhibited by UTP. Catalyzes the reversible phosphorylation of UMP to UDP. In Campylobacter jejuni subsp. jejuni serotype O:2 (strain ATCC 700819 / NCTC 11168), this protein is Uridylate kinase.